A 259-amino-acid polypeptide reads, in one-letter code: Deoxyribose-phosphate aldolase (259 aa).

Asp102 serves as the catalytic Proton donor/acceptor. Lys167 acts as the Schiff-base intermediate with acetaldehyde in catalysis. Lys201 acts as the Proton donor/acceptor in catalysis.

It belongs to the DeoC/FbaB aldolase family. DeoC type 2 subfamily.

The protein localises to the cytoplasm. The catalysed reaction is 2-deoxy-D-ribose 5-phosphate = D-glyceraldehyde 3-phosphate + acetaldehyde. It participates in carbohydrate degradation; 2-deoxy-D-ribose 1-phosphate degradation; D-glyceraldehyde 3-phosphate and acetaldehyde from 2-deoxy-alpha-D-ribose 1-phosphate: step 2/2. Its function is as follows. Catalyzes a reversible aldol reaction between acetaldehyde and D-glyceraldehyde 3-phosphate to generate 2-deoxy-D-ribose 5-phosphate. In Escherichia coli O45:K1 (strain S88 / ExPEC), this protein is Deoxyribose-phosphate aldolase.